Reading from the N-terminus, the 357-residue chain is S-adenosyl-L-methionine:benzoic acid/salicylic acid carboxyl methyltransferase 2 (357 aa).

Y18 is a binding site for S-adenosyl-L-homocysteine. Q25 is a benzoate binding site. S-adenosyl-L-homocysteine-binding residues include C59, N64, D96, L97, S135, and F136. W157 lines the benzoate pocket. 4 residues coordinate Mg(2+): N168, D254, F256, and N257. Q260 serves as a coordination point for benzoate.

The protein belongs to the methyltransferase superfamily. Type-7 methyltransferase family. In terms of tissue distribution, predominantly expressed in petal limbs and tubes of corollas.

It catalyses the reaction benzoate + S-adenosyl-L-methionine = methyl benzoate + S-adenosyl-L-homocysteine. The enzyme catalyses salicylate + S-adenosyl-L-methionine = methyl salicylate + S-adenosyl-L-homocysteine. Its pathway is aromatic compound metabolism. Functionally, converts benzoic acid into the volatile ester methyl benzoates. This scent, mostly produced in a rhythmical, diurnal manner, attracts the pollinators. This is S-adenosyl-L-methionine:benzoic acid/salicylic acid carboxyl methyltransferase 2 from Petunia hybrida (Petunia).